Consider the following 356-residue polypeptide: UDP-N-acetylglucosamine--N-acetylmuramyl-(pentapeptide) pyrophosphoryl-undecaprenol N-acetylglucosamine transferase (356 aa).

UDP-N-acetyl-alpha-D-glucosamine-binding positions include 14–16 (TGG), N126, R162, S190, I244, and Q289.

This sequence belongs to the glycosyltransferase 28 family. MurG subfamily.

It localises to the cell inner membrane. It catalyses the reaction di-trans,octa-cis-undecaprenyl diphospho-N-acetyl-alpha-D-muramoyl-L-alanyl-D-glutamyl-meso-2,6-diaminopimeloyl-D-alanyl-D-alanine + UDP-N-acetyl-alpha-D-glucosamine = di-trans,octa-cis-undecaprenyl diphospho-[N-acetyl-alpha-D-glucosaminyl-(1-&gt;4)]-N-acetyl-alpha-D-muramoyl-L-alanyl-D-glutamyl-meso-2,6-diaminopimeloyl-D-alanyl-D-alanine + UDP + H(+). It functions in the pathway cell wall biogenesis; peptidoglycan biosynthesis. Its function is as follows. Cell wall formation. Catalyzes the transfer of a GlcNAc subunit on undecaprenyl-pyrophosphoryl-MurNAc-pentapeptide (lipid intermediate I) to form undecaprenyl-pyrophosphoryl-MurNAc-(pentapeptide)GlcNAc (lipid intermediate II). This is UDP-N-acetylglucosamine--N-acetylmuramyl-(pentapeptide) pyrophosphoryl-undecaprenol N-acetylglucosamine transferase from Cupriavidus necator (strain ATCC 17699 / DSM 428 / KCTC 22496 / NCIMB 10442 / H16 / Stanier 337) (Ralstonia eutropha).